The chain runs to 329 residues: Gamma-resorcylate decarboxylase (329 aa).

Zn(2+)-binding residues include Glu-8, His-10, His-167, and Asp-290. Asp-290 is an active-site residue.

The protein belongs to the metallo-dependent hydrolases superfamily. ACMSD family. The cofactor is Zn(2+).

The catalysed reaction is 2,6-dihydroxybenzoate + H(+) = resorcinol + CO2. Its pathway is aromatic compound metabolism. Functionally, involved in the gamma-resorcylate (2,6-dihydroxybenzoate) catabolism. Catalyzes the reversible decarboxylation of gamma-resorcylate to resorcinol. The chain is Gamma-resorcylate decarboxylase from Rhodococcus jostii (strain RHA1).